Reading from the N-terminus, the 462-residue chain is Cytochrome P450 20A1 (462 aa).

A helical transmembrane segment spans residues 4–24 (FAIFAVTFLLALVGAVLYLYP). Cysteine 409 provides a ligand contact to heme.

Belongs to the cytochrome P450 family. Heme is required as a cofactor.

It is found in the membrane. This is Cytochrome P450 20A1 (Cyp20a1) from Mus musculus (Mouse).